Reading from the N-terminus, the 396-residue chain is MVDFGALPPEINSARMYAGPGSASLVAAAKMWDSVASDLFSAASAFQSVVWGLTTGSWIGSSAGLMVAAASPYVAWMSVTAGQAELTAAQVRVAAAAYETAYGLTVPPPVIAENRAELMILIATNLLGQNTPAIAVNEAEYGEMWAQDAAAMFGYAATAATATEALLPFEDAPLITNPGGLLEQAVAVEEAIDTAAANQLMNNVPQALQQLAQPTKSIWPFDQLSELWKAISPHLSPLSNIVSMLNNHVSMTNSGVSMASTLHSMLKGFAPAAAQAVETAAQNGVQAMSSLGSQLGSSLGSSGLGAGVAANLGRAASVGSLSVPQAWAAANQAVTPAARALPLTSLTSAAQTAPGHMLGGLPLGQLTNSGGGFGGVSNALRMPPRAYVMPRVPAAG.

Belongs to the mycobacterial PPE family.

This is an uncharacterized protein from Mycobacterium tuberculosis (strain ATCC 25618 / H37Rv).